Here is a 131-residue protein sequence, read N- to C-terminus: Small ribosomal subunit protein uS8 (131 aa).

The protein belongs to the universal ribosomal protein uS8 family. Part of the 30S ribosomal subunit. Contacts proteins S5 and S12.

One of the primary rRNA binding proteins, it binds directly to 16S rRNA central domain where it helps coordinate assembly of the platform of the 30S subunit. The protein is Small ribosomal subunit protein uS8 of Campylobacter jejuni subsp. jejuni serotype O:23/36 (strain 81-176).